The chain runs to 71 residues: Large ribosomal subunit protein bL31 (71 aa).

Zn(2+) contacts are provided by Cys-16, Cys-18, Cys-36, and Cys-39.

This sequence belongs to the bacterial ribosomal protein bL31 family. Type A subfamily. In terms of assembly, part of the 50S ribosomal subunit. Zn(2+) serves as cofactor.

Functionally, binds the 23S rRNA. This chain is Large ribosomal subunit protein bL31, found in Thermus thermophilus (strain ATCC BAA-163 / DSM 7039 / HB27).